Reading from the N-terminus, the 610-residue chain is Ubiquilin-like protein (610 aa).

Residues 31 to 105 (IRVIVKTPGN…IHVVIKSKHG (75 aa)) form the Ubiquitin-like domain. Residues 562 to 607 (QAPEVRFSKEMECLQAMGFVNYNANLQALIATDGDTNAAIYKLKSS) enclose the UBA domain.

This is Ubiquilin-like protein (Ubqlnl) from Mus musculus (Mouse).